The primary structure comprises 55 residues: uncharacterized protein (55 aa).

Residues 1 to 19 (MQILLVVRLVLLWLGGLSA) form the signal peptide.

This is an uncharacterized protein from Orgyia pseudotsugata multicapsid polyhedrosis virus (OpMNPV).